Here is a 67-residue protein sequence, read N- to C-terminus: MRSKHNELKSPIMSCSKRTEWKSILGPLIFRQQMILTQNLNRKLKTIKACMYQIRKLSKLKALYRGL.

The protein belongs to the rhabdoviruses C protein family.

Its function is as follows. Seems to stimulates transcription by the viral polymerase. May play a role in viral pathogenesis or transmission by insects vectors. In Aedes (Bovine), this protein is Protein C' (P).